The primary structure comprises 529 residues: Bifunctional purine biosynthesis protein PurH (529 aa).

One can recognise an MGS-like domain in the interval 1–148 (MQQRRPVRRA…KNHKDVAIVV (148 aa)).

The protein belongs to the PurH family.

It carries out the reaction (6R)-10-formyltetrahydrofolate + 5-amino-1-(5-phospho-beta-D-ribosyl)imidazole-4-carboxamide = 5-formamido-1-(5-phospho-D-ribosyl)imidazole-4-carboxamide + (6S)-5,6,7,8-tetrahydrofolate. The catalysed reaction is IMP + H2O = 5-formamido-1-(5-phospho-D-ribosyl)imidazole-4-carboxamide. The protein operates within purine metabolism; IMP biosynthesis via de novo pathway; 5-formamido-1-(5-phospho-D-ribosyl)imidazole-4-carboxamide from 5-amino-1-(5-phospho-D-ribosyl)imidazole-4-carboxamide (10-formyl THF route): step 1/1. Its pathway is purine metabolism; IMP biosynthesis via de novo pathway; IMP from 5-formamido-1-(5-phospho-D-ribosyl)imidazole-4-carboxamide: step 1/1. This is Bifunctional purine biosynthesis protein PurH from Salmonella dublin (strain CT_02021853).